A 161-amino-acid polypeptide reads, in one-letter code: AP-1 complex subunit sigma-1 (161 aa).

The protein belongs to the adaptor complexes small subunit family. As to quaternary structure, adaptor protein complex 1 (AP-1) is a heterotetramer composed of two large adaptins (gamma-type subunit and beta-type subunit), a medium adaptin (mu-type subunit) and a small adaptin (sigma-type subunit). Expressed in seedlings, roots, stems, leaves, flowers and siliques (developing fruits and seeds).

The protein resides in the golgi apparatus. Its subcellular location is the cytoplasmic vesicle. The protein localises to the clathrin-coated vesicle membrane. Functionally, subunit of clathrin-associated adaptor protein complex 1 that plays a role in protein sorting at the trans-Golgi network and early endosomes (TGN/EE). The AP complexes mediate the recruitment of clathrin to membranes and the recognition of sorting signals within the cytosolic tails of transmembrane cargo molecules. The polypeptide is AP-1 complex subunit sigma-1 (AAP19-1) (Arabidopsis thaliana (Mouse-ear cress)).